A 160-amino-acid polypeptide reads, in one-letter code: Probable nucleoside diphosphate kinase DDB_G0292928 (160 aa).

The ATP site is built by Lys12, Phe61, Arg103, Thr109, Arg122, and Asn132. His135 (pros-phosphohistidine intermediate) is an active-site residue.

This sequence belongs to the NDK family. Requires Mg(2+) as cofactor.

The enzyme catalyses a 2'-deoxyribonucleoside 5'-diphosphate + ATP = a 2'-deoxyribonucleoside 5'-triphosphate + ADP. It catalyses the reaction a ribonucleoside 5'-diphosphate + ATP = a ribonucleoside 5'-triphosphate + ADP. The protein is Probable nucleoside diphosphate kinase DDB_G0292928 of Dictyostelium discoideum (Social amoeba).